Reading from the N-terminus, the 152-residue chain is MYQAGVDFGTISLTPILHGVVATVLYFLVGAAVLVAGFLMVNLLTPGDLRRLVFIDRRPNAVVLAATMYVALAIVTIAAIYASSNQLAQGLIGVAVYGIVGVALQGVALVILEIAVPGRFREHIDAPALHPAVFATAVMLLAVAGVIAAALS.

The next 4 helical transmembrane spans lie at 21-41, 62-82, 92-112, and 131-151; these read VATV…FLMV, VVLA…AIYA, IGVA…LVIL, and PAVF…AAAL.

The protein belongs to the UPF0719 family.

It is found in the cell membrane. The polypeptide is UPF0719 transmembrane protein MT2674.1 (Mycobacterium tuberculosis (strain CDC 1551 / Oshkosh)).